The sequence spans 195 residues: MSAADAEYRVRHQSFWFVACVAVLVAQIVTEYLMGRVPICACGYVKLWEGGVNTSGNSQHLSDWYTPSHIIHGFLFYGLGYLILRRKPLAARLLLALVIESGWELLENSPLIIDRYRTATIALDYYGDSILNSAMDTVFMCVGFFFASRAPVALTVAIAIFFEIFTGYVIRDNLTLNVLMLIWPVEAIKVWQGGV.

A run of 4 helical transmembrane segments spans residues 15 to 35, 64 to 84, 127 to 147, and 150 to 170; these read FWFVACVAVLVAQIVTEYLMG, WYTPSHIIHGFLFYGLGYLIL, GDSILNSAMDTVFMCVGFFFA, and APVALTVAIAIFFEIFTGYVI.

It belongs to the UPF0314 family.

The protein localises to the cell membrane. This is UPF0314 protein RHECIAT_CH0004233 from Rhizobium etli (strain CIAT 652).